The primary structure comprises 84 residues: Beta-defensin 119 (84 aa).

A signal peptide spans 1–21; that stretch reads MKLLYLFLAILLAIEEPVISG. 2 disulfide bridges follow: Cys35-Cys49 and Cys39-Cys56.

The protein belongs to the beta-defensin family.

It localises to the secreted. Has antibacterial activity. The sequence is that of Beta-defensin 119 (DEFB119) from Pan troglodytes (Chimpanzee).